The sequence spans 301 residues: NADH-cytochrome b5 reductase 2 (301 aa).

Residues 14 to 30 (FLVPFAGATALSIGLAL) form a helical membrane-spanning segment. In terms of domain architecture, FAD-binding FR-type spans 51–155 (NEWVDLKLSK…KGPIVKWKWE (105 aa)). Residue 158–193 (QFKSIALIGGGTGITPLYQLLHQITSNPKDNTKVNL) coordinates FAD.

This sequence belongs to the flavoprotein pyridine nucleotide cytochrome reductase family. Requires FAD as cofactor.

It is found in the mitochondrion outer membrane. It catalyses the reaction 2 Fe(III)-[cytochrome b5] + NADH = 2 Fe(II)-[cytochrome b5] + NAD(+) + H(+). Its function is as follows. May mediate the reduction of outer membrane cytochrome b5. The protein is NADH-cytochrome b5 reductase 2 (MCR1) of Candida albicans (strain SC5314 / ATCC MYA-2876) (Yeast).